The chain runs to 279 residues: DNA repair protein RecO (279 aa).

This sequence belongs to the RecO family.

In terms of biological role, involved in DNA repair and RecF pathway recombination. The polypeptide is DNA repair protein RecO (Thermosynechococcus vestitus (strain NIES-2133 / IAM M-273 / BP-1)).